A 662-amino-acid chain; its full sequence is Bifunctional polymyxin resistance protein ArnA (662 aa).

The tract at residues 1 to 307 is formyltransferase ArnAFT; that stretch reads MTSKAVVFAY…ELGLVEGARL (307 aa). The active-site Proton donor; for formyltransferase activity is histidine 106. (6R)-10-formyltetrahydrofolate-binding positions include arginine 116 and 138 to 142; that span reads IERAD. The dehydrogenase ArnADH stretch occupies residues 316–662; that stretch reads RRTRVLILGV…EALREREAQA (347 aa). NAD(+)-binding positions include aspartate 349 and 370-371; that span reads DI. UDP-alpha-D-glucuronate is bound by residues alanine 395, tyrosine 400, and 434–435; that span reads TS. Glutamate 436 (proton acceptor; for decarboxylase activity) is an active-site residue. UDP-alpha-D-glucuronate contacts are provided by residues arginine 462, asparagine 493, 527 to 536, and tyrosine 614; that span reads RLVDGGAQKR. Residue arginine 620 is the Proton donor; for decarboxylase activity of the active site.

It in the N-terminal section; belongs to the Fmt family. UDP-L-Ara4N formyltransferase subfamily. The protein in the C-terminal section; belongs to the NAD(P)-dependent epimerase/dehydratase family. UDP-glucuronic acid decarboxylase subfamily. As to quaternary structure, homohexamer, formed by a dimer of trimers.

The enzyme catalyses UDP-alpha-D-glucuronate + NAD(+) = UDP-beta-L-threo-pentopyranos-4-ulose + CO2 + NADH. It carries out the reaction UDP-4-amino-4-deoxy-beta-L-arabinose + (6R)-10-formyltetrahydrofolate = UDP-4-deoxy-4-formamido-beta-L-arabinose + (6S)-5,6,7,8-tetrahydrofolate + H(+). It functions in the pathway nucleotide-sugar biosynthesis; UDP-4-deoxy-4-formamido-beta-L-arabinose biosynthesis; UDP-4-deoxy-4-formamido-beta-L-arabinose from UDP-alpha-D-glucuronate: step 1/3. Its pathway is nucleotide-sugar biosynthesis; UDP-4-deoxy-4-formamido-beta-L-arabinose biosynthesis; UDP-4-deoxy-4-formamido-beta-L-arabinose from UDP-alpha-D-glucuronate: step 3/3. The protein operates within bacterial outer membrane biogenesis; lipopolysaccharide biosynthesis. Bifunctional enzyme that catalyzes the oxidative decarboxylation of UDP-glucuronic acid (UDP-GlcUA) to UDP-4-keto-arabinose (UDP-Ara4O) and the addition of a formyl group to UDP-4-amino-4-deoxy-L-arabinose (UDP-L-Ara4N) to form UDP-L-4-formamido-arabinose (UDP-L-Ara4FN). The modified arabinose is attached to lipid A and is required for resistance to polymyxin and cationic antimicrobial peptides. The chain is Bifunctional polymyxin resistance protein ArnA from Pseudomonas aeruginosa (strain UCBPP-PA14).